We begin with the raw amino-acid sequence, 508 residues long: Strychnine-11-hydroxylase (508 aa).

A helical transmembrane segment spans residues 5–25 (MSFLLLFSLCFLIHCFVFLLI). A heme-binding site is contributed by C445.

The protein belongs to the cytochrome P450 family. Requires heme as cofactor.

Its subcellular location is the membrane. The enzyme catalyses beta-colubrine + reduced [NADPH--hemoprotein reductase] + O2 = 11-demethylbrucine + oxidized [NADPH--hemoprotein reductase] + H2O + H(+). It participates in alkaloid biosynthesis. In terms of biological role, monooxygenase involved in the biosynthesis of curare monoterpene indole alkaloids (MIAs), natural products such as strychnine, a neurotoxic compound used as a pesticide to control rodents, and its pharmacologically active derivatives, including brucine, used to regulate blood pressure. Curare alkaloids act as animal glycine receptor antagonists. Catalyzes the conversion of beta-colubrine to 11-deMe brucine. The chain is Strychnine-11-hydroxylase from Strychnos nux-vomica (Poison nut).